We begin with the raw amino-acid sequence, 452 residues long: La-related protein 1B (452 aa).

The span at 1–22 (MATTASSAANSASRFSIDSSIS) shows a compositional bias: low complexity. A disordered region spans residues 1–251 (MATTASSAAN…GFSHRNYSGR (251 aa)). Residue Ala-2 is modified to N-acetylalanine. Polar residues predominate over residues 44-68 (LSLSQDDPFSAPSVSPPTGNNSSDY). 4 stretches are compositionally biased toward low complexity: residues 99-117 (SWPA…SPSL), 136-163 (ATSN…VNNS), 171-185 (NNNT…NVSN), and 206-223 (SGNF…SYPR). The segment covering 225 to 236 (EGLHHGNRRNYE) has biased composition (basic and acidic residues). Residues 237 to 247 (HGNQSGFSHRN) show a composition bias toward polar residues. An HTH La-type RNA-binding domain is found at 328–417 (RNFDAILYNK…RGDWDKYLLP (90 aa)). Residues 419 to 452 (EPSRSGPAAGASNNASLVSQIESMTLSERSREGV) are disordered. Low complexity predominate over residues 422-434 (RSGPAAGASNNAS). The span at 435-445 (LVSQIESMTLS) shows a compositional bias: polar residues.

It belongs to the LARP family.

The protein localises to the cytoplasm. Its function is as follows. Promotes leaf senescence. The chain is La-related protein 1B (LARP1B) from Arabidopsis thaliana (Mouse-ear cress).